Consider the following 161-residue polypeptide: 2-C-methyl-D-erythritol 2,4-cyclodiphosphate synthase (161 aa).

A divalent metal cation-binding residues include Asp-11 and His-13. 4-CDP-2-C-methyl-D-erythritol 2-phosphate contacts are provided by residues 11–13 and 37–38; these read DIH and HS. His-45 serves as a coordination point for a divalent metal cation. 4-CDP-2-C-methyl-D-erythritol 2-phosphate is bound by residues 59–61, 135–138, and Arg-145; these read DIG and TTNE.

Belongs to the IspF family. As to quaternary structure, homotrimer. A divalent metal cation serves as cofactor.

It catalyses the reaction 4-CDP-2-C-methyl-D-erythritol 2-phosphate = 2-C-methyl-D-erythritol 2,4-cyclic diphosphate + CMP. It participates in isoprenoid biosynthesis; isopentenyl diphosphate biosynthesis via DXP pathway; isopentenyl diphosphate from 1-deoxy-D-xylulose 5-phosphate: step 4/6. Its function is as follows. Involved in the biosynthesis of isopentenyl diphosphate (IPP) and dimethylallyl diphosphate (DMAPP), two major building blocks of isoprenoid compounds. Catalyzes the conversion of 4-diphosphocytidyl-2-C-methyl-D-erythritol 2-phosphate (CDP-ME2P) to 2-C-methyl-D-erythritol 2,4-cyclodiphosphate (ME-CPP) with a corresponding release of cytidine 5-monophosphate (CMP). This chain is 2-C-methyl-D-erythritol 2,4-cyclodiphosphate synthase, found in Synechocystis sp. (strain ATCC 27184 / PCC 6803 / Kazusa).